A 1303-amino-acid polypeptide reads, in one-letter code: DNA-directed RNA polymerase subunit beta'' (1303 aa).

Zn(2+) contacts are provided by Cys-225, Cys-299, Cys-306, and Cys-309.

Belongs to the RNA polymerase beta' chain family. RpoC2 subfamily. In plastids the minimal PEP RNA polymerase catalytic core is composed of four subunits: alpha, beta, beta', and beta''. When a (nuclear-encoded) sigma factor is associated with the core the holoenzyme is formed, which can initiate transcription. The cofactor is Zn(2+).

Its subcellular location is the plastid. The protein localises to the chloroplast. It catalyses the reaction RNA(n) + a ribonucleoside 5'-triphosphate = RNA(n+1) + diphosphate. Functionally, DNA-dependent RNA polymerase catalyzes the transcription of DNA into RNA using the four ribonucleoside triphosphates as substrates. In Rhodomonas salina (Cryptomonas salina), this protein is DNA-directed RNA polymerase subunit beta''.